An 85-amino-acid polypeptide reads, in one-letter code: Large ribosomal subunit protein eL34 (85 aa).

This sequence belongs to the eukaryotic ribosomal protein eL34 family.

This is Large ribosomal subunit protein eL34 from Saccharolobus islandicus (strain M.16.27) (Sulfolobus islandicus).